Reading from the N-terminus, the 160-residue chain is SsrA-binding protein (160 aa).

This sequence belongs to the SmpB family.

Its subcellular location is the cytoplasm. Functionally, required for rescue of stalled ribosomes mediated by trans-translation. Binds to transfer-messenger RNA (tmRNA), required for stable association of tmRNA with ribosomes. tmRNA and SmpB together mimic tRNA shape, replacing the anticodon stem-loop with SmpB. tmRNA is encoded by the ssrA gene; the 2 termini fold to resemble tRNA(Ala) and it encodes a 'tag peptide', a short internal open reading frame. During trans-translation Ala-aminoacylated tmRNA acts like a tRNA, entering the A-site of stalled ribosomes, displacing the stalled mRNA. The ribosome then switches to translate the ORF on the tmRNA; the nascent peptide is terminated with the 'tag peptide' encoded by the tmRNA and targeted for degradation. The ribosome is freed to recommence translation, which seems to be the essential function of trans-translation. In Yersinia enterocolitica serotype O:8 / biotype 1B (strain NCTC 13174 / 8081), this protein is SsrA-binding protein.